The following is a 40-amino-acid chain: Photosystem II reaction center protein J (40 aa).

The helical transmembrane segment at 8 to 28 threads the bilayer; that stretch reads IPLWLIGTVAGIPVIGSVGVF.

Belongs to the PsbJ family. PSII is composed of 1 copy each of membrane proteins PsbA, PsbB, PsbC, PsbD, PsbE, PsbF, PsbH, PsbI, PsbJ, PsbK, PsbL, PsbM, PsbT, PsbX, PsbY, PsbZ, Psb30/Ycf12, at least 3 peripheral proteins of the oxygen-evolving complex and a large number of cofactors. It forms dimeric complexes.

It localises to the plastid. It is found in the chloroplast thylakoid membrane. Its function is as follows. One of the components of the core complex of photosystem II (PSII). PSII is a light-driven water:plastoquinone oxidoreductase that uses light energy to abstract electrons from H(2)O, generating O(2) and a proton gradient subsequently used for ATP formation. It consists of a core antenna complex that captures photons, and an electron transfer chain that converts photonic excitation into a charge separation. The polypeptide is Photosystem II reaction center protein J (Acorus calamus (Sweet flag)).